A 347-amino-acid polypeptide reads, in one-letter code: GTPase Obg (347 aa).

Residues M1–I158 enclose the Obg domain. Positions A159–K339 constitute an OBG-type G domain. Residues G165–S172, F190–T194, D212–G215, S280–D283, and S320–L322 each bind GTP. Mg(2+)-binding residues include S172 and T192.

This sequence belongs to the TRAFAC class OBG-HflX-like GTPase superfamily. OBG GTPase family. In terms of assembly, monomer. Mg(2+) is required as a cofactor.

The protein localises to the cytoplasm. Its function is as follows. An essential GTPase which binds GTP, GDP and possibly (p)ppGpp with moderate affinity, with high nucleotide exchange rates and a fairly low GTP hydrolysis rate. Plays a role in control of the cell cycle, stress response, ribosome biogenesis and in those bacteria that undergo differentiation, in morphogenesis control. In Campylobacter lari (strain RM2100 / D67 / ATCC BAA-1060), this protein is GTPase Obg.